The primary structure comprises 887 residues: Pyruvate dehydrogenase E1 component (887 aa).

As to quaternary structure, homodimer. Part of the PDH complex, consisting of multiple copies of pyruvate dehydrogenase (E1), dihydrolipoamide acetyltransferase (E2) and lipoamide dehydrogenase (E3). Thiamine diphosphate serves as cofactor.

It carries out the reaction N(6)-[(R)-lipoyl]-L-lysyl-[protein] + pyruvate + H(+) = N(6)-[(R)-S(8)-acetyldihydrolipoyl]-L-lysyl-[protein] + CO2. Component of the pyruvate dehydrogenase (PDH) complex, that catalyzes the overall conversion of pyruvate to acetyl-CoA and CO(2). This chain is Pyruvate dehydrogenase E1 component (aceE), found in Buchnera aphidicola subsp. Acyrthosiphon pisum (strain APS) (Acyrthosiphon pisum symbiotic bacterium).